A 331-amino-acid chain; its full sequence is Polyprenyl transferase mpaA' (331 aa).

8 consecutive transmembrane segments (helical) span residues M27–L47, I56–A76, L127–L147, V159–W179, G190–F210, L240–I260, W264–F284, and I295–G315.

Belongs to the UbiA prenyltransferase family. The cofactor is Mg(2+).

The protein localises to the golgi apparatus membrane. The enzyme catalyses 5,7-dihydroxy-4-methylphthalide + (2E,6E)-farnesyl diphosphate = 4-farnesyl-3,5-dihydroxy-6-methylphthalide + diphosphate. It participates in secondary metabolite biosynthesis; terpenoid biosynthesis. Functionally, polyprenyl transferase; part of the gene cluster that mediates the biosynthesis of mycophenolic acid (MPA), the first isolated antibiotic natural product in the world obtained from a culture of Penicillium brevicompactum in 1893. MpaA' is a Golgi apparatus-associated enzyme that catalyzes the prenylation of 5,7-dihydroxy-4,6-dimethylphthalide (DHMP) to yield farnesyl-DHMP (FDHMP). The first step of the pathway is the synthesis of 5-methylorsellinic acid (5MOA) by the cytosolic polyketide synthase mpaC. 5MOA is then converted to the phthalide compound 5,7-dihydroxy-4,6-dimethylphthalide (DHMP) by the endoplasmic reticulum-bound cytochrome P450 monooxygenase mpaDE. MpaDE first catalyzes hydroxylation of 5-MOA to 4,6-dihydroxy-2-(hydroxymethyl)-3-methylbenzoic acid (DHMB). MpaDE then acts as a lactone synthase that catalyzes the ring closure to convert DHMB into DHMP. The next step is the prenylation of DHMP by the Golgi apparatus-associated prenyltransferase mpaA to yield farnesyl-DHMP (FDHMP). The ER-bound oxygenase mpaB then mediates the oxidative cleavage the C19-C20 double bond in FDHMP to yield FDHMP-3C via a mycophenolic aldehyde intermediate. The O-methyltransferase mpaG catalyzes the methylation of FDHMP-3C to yield MFDHMP-3C. After the cytosolic methylation of FDHMP-3C, MFDHMP-3C enters into peroxisomes probably via free diffusion due to its low molecular weight. Upon a peroxisomal CoA ligation reaction, catalyzed by a beta-oxidation component enzyme acyl-CoA ligase ACL891, MFDHMP-3C-CoA would then be restricted to peroxisomes for the following beta-oxidation pathway steps. The peroxisomal beta-oxidation machinery than converts MFDHMP-3C-CoA into MPA_CoA, via a beta-oxidation chain-shortening process. Finally mpaH acts as a peroxisomal acyl-CoA hydrolase with high substrate specificity toward MPA-CoA to release the final product MPA. This Penicillium brevicompactum protein is Polyprenyl transferase mpaA'.